We begin with the raw amino-acid sequence, 1862 residues long: Protein RRP5 homolog (1862 aa).

The disordered stretch occupies residues 1-56 (MANLEESFPRGGTRKLHKSEKSSQQVVEQDNLFDVSTEEGPIKRKKSQKGPAKTKK). A2 carries the N-acetylalanine modification. S7 carries the post-translational modification Phosphoserine. A compositionally biased stretch (basic residues) spans 43–56 (KRKKSQKGPAKTKK). S1 motif domains are found at residues 83 to 171 (GMRI…LSVN), 187 to 258 (GMLL…LSVE), 281 to 346 (GLLV…LSLR), and 365 to 436 (GAVL…LSLR). S438 is subject to Phosphoserine. S1 motif domains follow at residues 453 to 522 (GTVV…MTLK), 542 to 611 (GLQT…LSFR), 636 to 707 (GQLV…LCRK), 729 to 798 (GMLL…LSLR), and 846 to 911 (GMVL…VSLH). The tract at residues 999–1036 (SKRTRMPVQRDSETVDDKGEEKEEEEEEEEKEEENLTV) is disordered. A compositionally biased stretch (basic and acidic residues) spans 1006–1019 (VQRDSETVDDKGEE). Over residues 1020-1033 (KEEEEEEEEKEEEN) the composition is skewed to acidic residues. S1 motif domains are found at residues 1047–1120 (GDKV…ISHP), 1160–1233 (GQTV…LSLI), 1241–1309 (GEVA…LSLR), and 1335–1407 (GQLL…LSLL). 2 disordered regions span residues 1406–1520 (LLPS…STEV) and 1545–1577 (REES…KAEK). Basic and acidic residues-rich tracts occupy residues 1423–1437 (PKQE…EGQK) and 1445–1454 (RREEKEEPQK). Residue K1424 forms a Glycyl lysine isopeptide (Lys-Gly) (interchain with G-Cter in SUMO2) linkage. Residues S1468 and S1490 each carry the phosphoserine modification. The segment covering 1566-1577 (KERELEKQKAEK) has biased composition (basic and acidic residues). HAT repeat units lie at residues 1590 to 1622 (GRQP…FHLQ), 1696 to 1728 (EKYK…FVLG), 1766 to 1798 (GDVE…MTIK), and 1800 to 1835 (GSQT…YEKQ).

Interacts with NF-kappa-B p50/NFKB1 and NF-kappa-B p65/RELA. As to expression, ubiquitous.

The protein localises to the nucleus. It localises to the nucleolus. Functionally, essential for the generation of mature 18S rRNA, specifically necessary for cleavages at sites A0, 1 and 2 of the 47S precursor. Directly interacts with U3 snoRNA. This Mus musculus (Mouse) protein is Protein RRP5 homolog (Pdcd11).